Consider the following 361-residue polypeptide: 3-dehydroquinate synthase (361 aa).

NAD(+) contacts are provided by residues 105–109, 129–130, lysine 142, lysine 151, and 169–172; these read GVIGD, TT, and FLST. Residues glutamate 184, histidine 247, and histidine 264 each coordinate Zn(2+).

The protein belongs to the sugar phosphate cyclases superfamily. Dehydroquinate synthase family. The cofactor is Co(2+). It depends on Zn(2+) as a cofactor. NAD(+) serves as cofactor.

The protein localises to the cytoplasm. It catalyses the reaction 7-phospho-2-dehydro-3-deoxy-D-arabino-heptonate = 3-dehydroquinate + phosphate. The protein operates within metabolic intermediate biosynthesis; chorismate biosynthesis; chorismate from D-erythrose 4-phosphate and phosphoenolpyruvate: step 2/7. Catalyzes the conversion of 3-deoxy-D-arabino-heptulosonate 7-phosphate (DAHP) to dehydroquinate (DHQ). This chain is 3-dehydroquinate synthase, found in Endomicrobium trichonymphae.